The primary structure comprises 702 residues: Polyribonucleotide nucleotidyltransferase (702 aa).

Positions 485 and 491 each coordinate Mg(2+). The KH domain occupies 552-612 (PRTEIICIDP…EGVKKAISII (61 aa)). The region spanning 622-690 (GEIYLGKVTK…NQGRINLSRK (69 aa)) is the S1 motif domain.

Belongs to the polyribonucleotide nucleotidyltransferase family. The cofactor is Mg(2+).

The protein resides in the cytoplasm. It catalyses the reaction RNA(n+1) + phosphate = RNA(n) + a ribonucleoside 5'-diphosphate. Functionally, involved in mRNA degradation. Catalyzes the phosphorolysis of single-stranded polyribonucleotides processively in the 3'- to 5'-direction. The protein is Polyribonucleotide nucleotidyltransferase of Clostridium botulinum (strain Langeland / NCTC 10281 / Type F).